The following is a 421-amino-acid chain: ATP-dependent RNA helicase RhlB (421 aa).

The Q motif signature appears at 9–37 (QKFSDFALHPKVVEALEKKGFHNCTPIQA). Residues 40 to 219 (LPLTLAGRDV…FEQMNNAEYI (180 aa)) form the Helicase ATP-binding domain. 53–60 (AQTGTGKT) provides a ligand contact to ATP. Residues 165–168 (DEAD) carry the DEAD box motif. The Helicase C-terminal domain maps to 245 to 390 (RLLQTLIEEE…VSKYNPDALM (146 aa)). A disordered region spans residues 392–421 (DLPKPLRLTRPRTGNGPRRTGAPRNRRRSG). Residues 402–414 (PRTGNGPRRTGAP) are compositionally biased toward low complexity.

Belongs to the DEAD box helicase family. RhlB subfamily. As to quaternary structure, component of the RNA degradosome, which is a multiprotein complex involved in RNA processing and mRNA degradation.

It localises to the cytoplasm. It carries out the reaction ATP + H2O = ADP + phosphate + H(+). DEAD-box RNA helicase involved in RNA degradation. Has RNA-dependent ATPase activity and unwinds double-stranded RNA. The protein is ATP-dependent RNA helicase RhlB of Escherichia coli O157:H7 (strain EC4115 / EHEC).